A 350-amino-acid polypeptide reads, in one-letter code: Aldo-keto reductase 1B (350 aa).

Catalysis depends on tyrosine 84, which acts as the Proton donor. A substrate-binding site is contributed by histidine 146. 244–306 is an NADP(+) binding site; sequence SPLGSPNRPW…SVTKDRIESN (63 aa).

The protein belongs to the aldo/keto reductase family.

Its subcellular location is the cytoplasm. It catalyses the reaction an alditol + NADP(+) = an aldose + NADPH + H(+). It carries out the reaction all-trans-retinol + NADP(+) = all-trans-retinal + NADPH + H(+). The enzyme catalyses 9-cis-retinol + NADP(+) = 9-cis-retinal + NADPH + H(+). The catalysed reaction is 13-cis-retinol + NADP(+) = 13-cis-retinal + NADPH + H(+). It catalyses the reaction glycerol + NADP(+) = D-glyceraldehyde + NADPH + H(+). It carries out the reaction glycerol + NADP(+) = L-glyceraldehyde + NADPH + H(+). The enzyme catalyses prenol + NADP(+) = 3-methyl-2-butenal + NADPH + H(+). The catalysed reaction is (E)-hex-2-en-1-ol + NADP(+) = (E)-hex-2-enal + NADPH + H(+). It catalyses the reaction (E,E)-2,4-hexadien-1-ol + NADP(+) = (E,E)-2,4-hexadienal + NADPH + H(+). It carries out the reaction a 4-hydroxynonen-1-ol + NADP(+) = a 4-hydroxynonenal + NADPH + H(+). The enzyme catalyses prostaglandin F2alpha + NADP(+) = prostaglandin H2 + NADPH + H(+). The catalysed reaction is allyl alcohol + NADP(+) = acrolein + NADPH + H(+). It catalyses the reaction pyridine 3-methanol + NADP(+) = pyridine-3-carbaldehyde + NADPH + H(+). It carries out the reaction 1-hexadecanoyl-2-(5-oxopentanoyl)-sn-glycero-3-phosphocholine + NADPH + H(+) = 1-hexadecanoyl-2-(5-hydroxypentanoyl)-sn-glycero-3-phosphocholine + NADP(+). The enzyme catalyses 1-hexadecanoyl-2-(7-oxoheptanoyl)-sn-glycero-3-phosphocholine + NADPH + H(+) = 1-hexadecanoyl-2-(7-hydroxyheptanoyl)-sn-glycero-3-phosphocholine + NADP(+). The catalysed reaction is 1-hexadecanoyl-2-(9-oxononanoyl)-sn-glycero-3-phosphocholine + NADPH + H(+) = 1-hexadecanoyl-2-(9-hydroxynonanoyl)-sn-glycero-3-phosphocholine + NADP(+). It catalyses the reaction 1-hexadecanoyl-2-(5-oxopentanoyl)-sn-glycero-3-phosphoethanolamine + NADPH + H(+) = 1-hexadecanoyl-2-(5-hydroxypentanoyl)-sn-glycero-3-phosphoethanolamine + NADP(+). Catalyzes the NADPH-dependent reduction of a wide variety of carbonyl-containing compounds to their corresponding alcohols. Displays enzymatic activity towards endogenous metabolites such as aromatic and aliphatic aldehydes, ketones, monosaccharides, bile acids and xenobiotics substrates. Key enzyme in the polyol pathway, catalyzes reduction of glucose to sorbitol during hyperglycemia. Reduces steroids and their derivatives and prostaglandins. Through production of prostaglandin F2alpha may regulate the activity of non-muscle myosin II in an autocrine or paracrine fashion; influences border cell and nurse cell stiffness to facilitate border cell cluster migration. Also regulates the cell surface localization of integrins in an autocrine or paracrine fashion; influences border cell adhesion to maintain border cell cluster morphology. In hemocytes, probably contributes to production of sugar alcohols in the hemolymph, which act as alarmins involved in gut-fat body innate immunological communication (GFIC); leads to activation of the imd/Relish signaling pathway in the fat body. The protein is Aldo-keto reductase 1B of Drosophila melanogaster (Fruit fly).